An 89-amino-acid chain; its full sequence is Large ribosomal subunit protein bL27 (89 aa).

Residues 1-22 (MAHTKKGGSSRNGRDSESKRLG) form a disordered region.

The protein belongs to the bacterial ribosomal protein bL27 family.

In Brucella melitensis biotype 1 (strain ATCC 23456 / CCUG 17765 / NCTC 10094 / 16M), this protein is Large ribosomal subunit protein bL27.